The following is a 368-amino-acid chain: Cyclic di-GMP phosphodiesterase TM_0186 (368 aa).

The region spanning 2 to 114 (TVLIVEDDDI…LLRLKITHAL (113 aa)) is the Response regulatory domain. D49 carries the 4-aspartylphosphate modification. Residues 148 to 345 (YEDFLFEVLE…ITDVYRREKD (198 aa)) enclose the HD-GYP domain. Residues E169, H173, H205, D206, H234, H260, H261, and D289 each coordinate a divalent metal cation. The disordered stretch occupies residues 341 to 368 (RREKDEDTSHNGGRSHQSSPGEGVEGIR). Positions 350–360 (HNGGRSHQSSP) are enriched in polar residues.

It carries out the reaction 3',3'-c-di-GMP + 2 H2O = 2 GMP + 2 H(+). Can function in vivo with either divalent iron or manganese occupying di- and trimetal sites. Dimetal is necessary and sufficient to catalyze conversion of c-di-GMP to pGpG, but conversion of pGpG to GMP requires an occupied trimetal site. Its function is as follows. Phosphodiesterase (PDE) that catalyzes the hydrolysis of cyclic diguanylate (c-di-GMP) to GMP. Hydrolyzes c-di-GMP to GMP in a two-step reaction, via the linear intermediate 5'-phosphoguanylyl(3'-&gt;5')guanosine (pGpG). This Thermotoga maritima (strain ATCC 43589 / DSM 3109 / JCM 10099 / NBRC 100826 / MSB8) protein is Cyclic di-GMP phosphodiesterase TM_0186.